A 709-amino-acid chain; its full sequence is ATP-binding cassette sub-family F member 3 (709 aa).

The residue at position 2 (Ala-2) is an N-acetylalanine. Ser-83 is subject to Phosphoserine. Over residues 129–143 (RLKAKQEKRSEKETL) the composition is skewed to basic and acidic residues. The segment at 129-171 (RLKAKQEKRSEKETLKTSNPLVLEEASASQAGSRKESRLESSG) is disordered. 3 positions are modified to phosphoserine: Ser-155, Ser-157, and Ser-161. The segment covering 161-171 (SRKESRLESSG) has biased composition (basic and acidic residues). 2 consecutive ABC transporter domains span residues 178–424 (VRIE…LNQQ) and 492–707 (LQLD…RREG). ATP is bound at residue 210-217 (GRNGLGKT). A Phosphoserine modification is found at Ser-283. 525-532 (GENGAGKS) is a binding site for ATP.

It belongs to the ABC transporter superfamily. ABCF family. EF3 subfamily.

In terms of biological role, displays an antiviral effect against flaviviruses such as west Nile virus (WNV) in the presence of OAS1B. The polypeptide is ATP-binding cassette sub-family F member 3 (Abcf3) (Mus musculus (Mouse)).